The primary structure comprises 204 residues: uncharacterized protein (204 aa).

Residues 109–136 (QFDIDVHKDQIEKLKDLYKALLRIAETT) adopt a coiled-coil conformation.

This is an uncharacterized protein from Bacillus subtilis (strain 168).